The following is a 557-amino-acid chain: Potassium-transporting ATPase potassium-binding subunit (557 aa).

12 helical membrane passes run 5–25, 63–83, 132–152, 170–190, 253–273, 283–303, 329–349, 356–376, 379–399, 416–436, 484–504, and 526–546; these read GFLL…PLGS, LCAI…MLLG, GLTV…FALI, LLRI…LFFI, FVQM…FGEV, LLWA…WAEV, VLVS…AVIA, ALGG…FGGV, GLYG…LMIG, LTAL…ALAM, LLAF…MAIA, and LFVG…FIPA.

This sequence belongs to the KdpA family. As to quaternary structure, the system is composed of three essential subunits: KdpA, KdpB and KdpC.

The protein localises to the cell inner membrane. Its function is as follows. Part of the high-affinity ATP-driven potassium transport (or Kdp) system, which catalyzes the hydrolysis of ATP coupled with the electrogenic transport of potassium into the cytoplasm. This subunit binds the periplasmic potassium ions and delivers the ions to the membrane domain of KdpB through an intramembrane tunnel. This is Potassium-transporting ATPase potassium-binding subunit from Escherichia coli O139:H28 (strain E24377A / ETEC).